Here is a 522-residue protein sequence, read N- to C-terminus: Colicin-E1 (522 aa).

Disordered stretches follow at residues 26–52 (NGTPDGSGSGGGGGKGGSKSESSAAIH) and 136–165 (EEKARKEAEAAEKAFQEAEQRRKEIEREKA). A compositionally biased stretch (gly residues) spans 30–42 (DGSGSGGGGGKGG). The next 2 helical transmembrane spans lie at 471–487 (AADAGVSYVVALLFSLL) and 494–510 (IWGIAIVTGILCSYIDK).

The protein belongs to the channel forming colicin family.

Its subcellular location is the cell membrane. Its function is as follows. This colicin is a channel-forming colicin. This class of transmembrane toxins depolarize the cytoplasmic membrane, leading to dissipation of cellular energy. In terms of biological role, colicins are polypeptide toxins produced by and active against E.coli and closely related bacteria. The sequence is that of Colicin-E1 (cea) from Escherichia coli.